The primary structure comprises 131 residues: Holo-[acyl-carrier-protein] synthase (131 aa).

Mg(2+) is bound by residues Asp-8 and Glu-63.

Belongs to the P-Pant transferase superfamily. AcpS family. Requires Mg(2+) as cofactor.

The protein resides in the cytoplasm. The enzyme catalyses apo-[ACP] + CoA = holo-[ACP] + adenosine 3',5'-bisphosphate + H(+). Its function is as follows. Transfers the 4'-phosphopantetheine moiety from coenzyme A to a Ser of acyl-carrier-protein. The chain is Holo-[acyl-carrier-protein] synthase from Shewanella halifaxensis (strain HAW-EB4).